Here is a 230-residue protein sequence, read N- to C-terminus: MDSDFYRAYLLHRRPYSDSQVMLDMLVEGVGQLRMLARISGRQATKHKAQLQPFQALLVHYNGKYDLKYINKFELHGTPLFLKGDELYCGFYLNELTNRIVPINEPIDQVFQLYNTHLKNLNSGANLQAVLRSYEFQLLELLGYGVDFSFDASGEPIDEKRTYSYFAEVGFLVQDDPRSGFSGLQLNAIANHDFSQADVLYMAKQLSRYLLKPLLGNKPLKSRELFAASQ.

It belongs to the RecO family.

In terms of biological role, involved in DNA repair and RecF pathway recombination. This is DNA repair protein RecO from Pseudoalteromonas translucida (strain TAC 125).